The sequence spans 132 residues: Small ribosomal subunit protein uS8c (132 aa).

Belongs to the universal ribosomal protein uS8 family. As to quaternary structure, part of the 30S ribosomal subunit.

Its subcellular location is the plastid. It localises to the chloroplast. One of the primary rRNA binding proteins, it binds directly to 16S rRNA central domain where it helps coordinate assembly of the platform of the 30S subunit. The protein is Small ribosomal subunit protein uS8c (rps8) of Amborella trichopoda.